The sequence spans 234 residues: Octanoyltransferase (234 aa).

Residues 35-221 (DGAPELVWFL…AFQQVFASPL (187 aa)) enclose the BPL/LPL catalytic domain. Residues 74 to 81 (RGGQYTYH), 150 to 152 (AIG), and 163 to 165 (GIS) contribute to the substrate site. Residue C181 is the Acyl-thioester intermediate of the active site.

It belongs to the LipB family.

It localises to the cytoplasm. The enzyme catalyses octanoyl-[ACP] + L-lysyl-[protein] = N(6)-octanoyl-L-lysyl-[protein] + holo-[ACP] + H(+). The protein operates within protein modification; protein lipoylation via endogenous pathway; protein N(6)-(lipoyl)lysine from octanoyl-[acyl-carrier-protein]: step 1/2. Its function is as follows. Catalyzes the transfer of endogenously produced octanoic acid from octanoyl-acyl-carrier-protein onto the lipoyl domains of lipoate-dependent enzymes. Lipoyl-ACP can also act as a substrate although octanoyl-ACP is likely to be the physiological substrate. The sequence is that of Octanoyltransferase from Hyphomonas neptunium (strain ATCC 15444).